Reading from the N-terminus, the 488-residue chain is Protein nucleotidyltransferase YdiU (488 aa).

ATP contacts are provided by Gly91, Gly93, Arg94, Lys114, Asp126, Gly127, Arg177, and Arg184. Asp253 (proton acceptor) is an active-site residue. The Mg(2+) site is built by Asn254 and Asp263. Residue Asp263 participates in ATP binding.

The protein belongs to the SELO family. Requires Mg(2+) as cofactor. Mn(2+) serves as cofactor.

It catalyses the reaction L-seryl-[protein] + ATP = 3-O-(5'-adenylyl)-L-seryl-[protein] + diphosphate. The catalysed reaction is L-threonyl-[protein] + ATP = 3-O-(5'-adenylyl)-L-threonyl-[protein] + diphosphate. The enzyme catalyses L-tyrosyl-[protein] + ATP = O-(5'-adenylyl)-L-tyrosyl-[protein] + diphosphate. It carries out the reaction L-histidyl-[protein] + UTP = N(tele)-(5'-uridylyl)-L-histidyl-[protein] + diphosphate. It catalyses the reaction L-seryl-[protein] + UTP = O-(5'-uridylyl)-L-seryl-[protein] + diphosphate. The catalysed reaction is L-tyrosyl-[protein] + UTP = O-(5'-uridylyl)-L-tyrosyl-[protein] + diphosphate. Its function is as follows. Nucleotidyltransferase involved in the post-translational modification of proteins. It can catalyze the addition of adenosine monophosphate (AMP) or uridine monophosphate (UMP) to a protein, resulting in modifications known as AMPylation and UMPylation. The chain is Protein nucleotidyltransferase YdiU from Bacillus thuringiensis subsp. konkukian (strain 97-27).